Consider the following 632-residue polypeptide: tRNA uridine 5-carboxymethylaminomethyl modification enzyme MnmG (632 aa).

13 to 18 (GGGHAG) is an FAD binding site. 273–287 (GPRYCPSIEDKIHRF) contacts NAD(+).

This sequence belongs to the MnmG family. In terms of assembly, homodimer. Heterotetramer of two MnmE and two MnmG subunits. It depends on FAD as a cofactor.

The protein resides in the cytoplasm. Its function is as follows. NAD-binding protein involved in the addition of a carboxymethylaminomethyl (cmnm) group at the wobble position (U34) of certain tRNAs, forming tRNA-cmnm(5)s(2)U34. This is tRNA uridine 5-carboxymethylaminomethyl modification enzyme MnmG from Psychrobacter cryohalolentis (strain ATCC BAA-1226 / DSM 17306 / VKM B-2378 / K5).